We begin with the raw amino-acid sequence, 195 residues long: Peptidyl-tRNA hydrolase (195 aa).

Position 17 (tyrosine 17) interacts with tRNA. Histidine 22 functions as the Proton acceptor in the catalytic mechanism. TRNA is bound by residues phenylalanine 68, asparagine 70, and asparagine 116.

Belongs to the PTH family. Monomer.

The protein resides in the cytoplasm. It catalyses the reaction an N-acyl-L-alpha-aminoacyl-tRNA + H2O = an N-acyl-L-amino acid + a tRNA + H(+). In terms of biological role, hydrolyzes ribosome-free peptidyl-tRNAs (with 1 or more amino acids incorporated), which drop off the ribosome during protein synthesis, or as a result of ribosome stalling. Catalyzes the release of premature peptidyl moieties from peptidyl-tRNA molecules trapped in stalled 50S ribosomal subunits, and thus maintains levels of free tRNAs and 50S ribosomes. This Erwinia tasmaniensis (strain DSM 17950 / CFBP 7177 / CIP 109463 / NCPPB 4357 / Et1/99) protein is Peptidyl-tRNA hydrolase.